Reading from the N-terminus, the 354-residue chain is UDP-2,3-diacetamido-2,3-dideoxy-D-glucuronate 2-epimerase (354 aa).

Belongs to the UDP-N-acetylglucosamine 2-epimerase family.

The catalysed reaction is UDP-2,3-diacetamido-2,3-dideoxy-alpha-D-glucuronate = UDP-2,3-diacetamido-2,3-dideoxy-alpha-D-mannuronate. The protein operates within bacterial outer membrane biogenesis; LPS O-antigen biosynthesis. Functionally, plays a role in the biosynthesis of B-band O antigen for serotype O5. Catalyzes the epimerization of UDP-2,3-diacetamido-2,3-dideoxy-alpha-D-glucuronic acid (UDP-alpha-D-GlcNAc3NAcA) to UDP-2,3-diacetamido-2,3-dideoxy-alpha-D-mannuronic acid (UDP-alpha-D-ManNAc3NAcA). Exhibits high specificity towards the substrate as UDP-alpha-D-GlcNAc, UDP-alpha-D-GlcNAcA (UDP-2-acetamido-2-deoxy-alpha-D-glucuronic acid) and UDP-alpha-D-GlcNAc3NAc (UDP-2,3-diacetamido-2,3-dideoxy-alpha-D-glucose) cannot act as substrates. The polypeptide is UDP-2,3-diacetamido-2,3-dideoxy-D-glucuronate 2-epimerase (Pseudomonas aeruginosa (strain ATCC 15692 / DSM 22644 / CIP 104116 / JCM 14847 / LMG 12228 / 1C / PRS 101 / PAO1)).